We begin with the raw amino-acid sequence, 394 residues long: Exodeoxyribonuclease 7 large subunit (394 aa).

Belongs to the XseA family. As to quaternary structure, heterooligomer composed of large and small subunits.

The protein resides in the cytoplasm. The catalysed reaction is Exonucleolytic cleavage in either 5'- to 3'- or 3'- to 5'-direction to yield nucleoside 5'-phosphates.. Functionally, bidirectionally degrades single-stranded DNA into large acid-insoluble oligonucleotides, which are then degraded further into small acid-soluble oligonucleotides. This chain is Exodeoxyribonuclease 7 large subunit, found in Thermotoga sp. (strain RQ2).